Reading from the N-terminus, the 835-residue chain is Leucine--tRNA ligase (835 aa).

A 'HIGH' region motif is present at residues 36–46; that stretch reads PYPSGKIHVGH. Residues 602–606 carry the 'KMSKS' region motif; the sequence is KMSKS. Residue lysine 605 participates in ATP binding.

This sequence belongs to the class-I aminoacyl-tRNA synthetase family.

Its subcellular location is the cytoplasm. It carries out the reaction tRNA(Leu) + L-leucine + ATP = L-leucyl-tRNA(Leu) + AMP + diphosphate. This chain is Leucine--tRNA ligase, found in Rickettsia africae (strain ESF-5).